Reading from the N-terminus, the 236-residue chain is Small ribosomal subunit protein uS2c (236 aa).

Belongs to the universal ribosomal protein uS2 family.

The protein localises to the plastid. It localises to the chloroplast. The protein is Small ribosomal subunit protein uS2c (rps2) of Lepidium virginicum (Virginia pepperweed).